The primary structure comprises 172 residues: Auxin-responsive protein IAA30 (172 aa).

Residues M1–S18 show a composition bias toward low complexity. The segment at M1–T28 is disordered. The short motif at L35 to L39 is the EAR-like (transcriptional repression) element. The PB1 domain occupies S82–H171.

Belongs to the Aux/IAA family. In terms of assembly, homodimers and heterodimers.

The protein localises to the nucleus. Functionally, aux/IAA proteins are short-lived transcriptional factors that function as repressors of early auxin response genes at low auxin concentrations. Repression is thought to result from the interaction with auxin response factors (ARFs), proteins that bind to the auxin-responsive promoter element (AuxRE). Formation of heterodimers with ARF proteins may alter their ability to modulate early auxin response genes expression. The polypeptide is Auxin-responsive protein IAA30 (IAA30) (Arabidopsis thaliana (Mouse-ear cress)).